A 186-amino-acid chain; its full sequence is MSVKDVAQKIEPKMKKCLEAFQHEITTIRTGKATTTLLDRVKVEAYGQQMPLKQVGNVSVQDAHTLMVQVWDKSMVSATEKAIRDANLGLNPAAEGQSIRVSIPPLTEERRKEFVKLTKKFGEDSKVSLRNLRRDMIQDIEKLEKAKAVSEDEKNKGKKDADDLLHKYEKLLMDMITAKEKEIMAV.

This sequence belongs to the RRF family.

The protein resides in the cytoplasm. Functionally, responsible for the release of ribosomes from messenger RNA at the termination of protein biosynthesis. May increase the efficiency of translation by recycling ribosomes from one round of translation to another. This Chlorobium chlorochromatii (strain CaD3) protein is Ribosome-recycling factor.